The primary structure comprises 306 residues: MKSIQVQQLVEEFNLEVLAGEDHRERTITKSRTHRPGLEFIGYFDFFPMERVQILGKKEINYLHQLNEQERDIRIGNVVNYHPPCFIVTSDQDGLTYLKKYCHAEQIPLLRTKEATVDFMAKVDHYLTRKLAPEIAVHGVCMNVLGIGILIRGESGVGKSELAHTLLGRGHRLVADDIVVLKRLSHKTILGTHNDKNKEFLALRSVGLLNVVRAYGSRAFQDETRISLDIKLSKWEKDSLHNELEFETQYRDYMGVSVPSIEIQLQPGRDVAGLIEAAANNWYLQQQGYSAAEDFMNRIEWQDGDD.

Residues H138 and K159 contribute to the active site. 153-160 (GESGVGKS) contacts ATP. Residue S160 participates in Mg(2+) binding. The Proton acceptor; for phosphorylation activity. Proton donor; for dephosphorylation activity role is filled by D177. Residues 201–210 (LALRSVGLLN) form an important for the catalytic mechanism of both phosphorylation and dephosphorylation region. Residues 264–269 (QLQPGR) form an important for the catalytic mechanism of dephosphorylation region.

Belongs to the HPrK/P family. In terms of assembly, homohexamer. Requires Mg(2+) as cofactor.

It catalyses the reaction [HPr protein]-L-serine + ATP = [HPr protein]-O-phospho-L-serine + ADP + H(+). The enzyme catalyses [HPr protein]-O-phospho-L-serine + phosphate + H(+) = [HPr protein]-L-serine + diphosphate. Its function is as follows. Catalyzes the ATP- as well as the pyrophosphate-dependent phosphorylation of a specific serine residue in HPr, a phosphocarrier protein of the phosphoenolpyruvate-dependent sugar phosphotransferase system (PTS). HprK/P also catalyzes the pyrophosphate-producing, inorganic phosphate-dependent dephosphorylation (phosphorolysis) of seryl-phosphorylated HPr (P-Ser-HPr). The two antagonistic activities of HprK/P are regulated by several intracellular metabolites, which change their concentration in response to the absence or presence of rapidly metabolisable carbon sources (glucose, fructose, etc.) in the growth medium. Also phosphorylates/dephosphorylates the HPr-like catabolite repression protein crh on a specific serine residue. Therefore, by controlling the phosphorylation state of HPr and crh, HPrK/P is a sensor enzyme that plays a major role in the regulation of carbon metabolism and sugar transport: it mediates carbon catabolite repression (CCR), and regulates PTS-catalyzed carbohydrate uptake and inducer exclusion. This Oceanobacillus iheyensis (strain DSM 14371 / CIP 107618 / JCM 11309 / KCTC 3954 / HTE831) protein is Putative HPr kinase/phosphorylase 2 (hprK2).